The sequence spans 351 residues: DNA polymerase IV (351 aa).

The UmuC domain occupies 4–185 (IIHVDMDCFF…LPLEKIPGVG (182 aa)). Positions 8 and 103 each coordinate Mg(2+). E104 is a catalytic residue.

The protein belongs to the DNA polymerase type-Y family. As to quaternary structure, monomer. Mg(2+) serves as cofactor.

Its subcellular location is the cytoplasm. It carries out the reaction DNA(n) + a 2'-deoxyribonucleoside 5'-triphosphate = DNA(n+1) + diphosphate. Functionally, poorly processive, error-prone DNA polymerase involved in untargeted mutagenesis. Copies undamaged DNA at stalled replication forks, which arise in vivo from mismatched or misaligned primer ends. These misaligned primers can be extended by PolIV. Exhibits no 3'-5' exonuclease (proofreading) activity. May be involved in translesional synthesis, in conjunction with the beta clamp from PolIII. This Shigella flexneri protein is DNA polymerase IV.